A 121-amino-acid polypeptide reads, in one-letter code: Putative membrane protein insertion efficiency factor (121 aa).

The tract at residues 97–121 (VPARRDRHAGGRRCCPANVDEQRST) is disordered.

It belongs to the UPF0161 family.

The protein localises to the cell membrane. Its function is as follows. Could be involved in insertion of integral membrane proteins into the membrane. This chain is Putative membrane protein insertion efficiency factor, found in Rhodococcus jostii (strain RHA1).